The chain runs to 375 residues: Arabinose metabolism transcriptional repressor (375 aa).

In terms of domain architecture, HTH gntR-type spans 1–70 (METKYNFVKQ…QGAGTFCADR (70 aa)). A DNA-binding region (H-T-H motif) is located at residues 30 to 49 (ENELMKEYNVSRHTVRKAID).

It is found in the cytoplasm. Transcriptional repressor of the arabinose utilization genes. The polypeptide is Arabinose metabolism transcriptional repressor (araR) (Halalkalibacterium halodurans (strain ATCC BAA-125 / DSM 18197 / FERM 7344 / JCM 9153 / C-125) (Bacillus halodurans)).